Consider the following 359-residue polypeptide: C-X-C chemokine receptor type 4 (359 aa).

Residues 1–23 (MEPISVSIYTSDNYSEEVGSGDY) are important for chemokine binding and signaling. At 1-40 (MEPISVSIYTSDNYSEEVGSGDYDSNKEPCFRDENVHFNR) the chain is on the extracellular side. Residue tyrosine 9 is modified to Sulfotyrosine. A glycan (N-linked (GlcNAc...) asparagine) is linked at asparagine 13. The residue at position 14 (tyrosine 14) is a Sulfotyrosine. Residue serine 20 is glycosylated (O-linked (Xyl...) (chondroitin sulfate) serine). Tyrosine 23 is subject to Sulfotyrosine. 2 cysteine pairs are disulfide-bonded: cysteine 30–cysteine 281 and cysteine 111–cysteine 193. The helical transmembrane segment at 41-65 (IFLPTIYFIIFLTGIVGNGLVILVM) threads the bilayer. The Cytoplasmic portion of the chain corresponds to 66–79 (GYQKKLRSMTDKYR). Residues 80–101 (LHLSVADLLFVITLPFWAVDAM) form a helical membrane-spanning segment. The chemokine binding stretch occupies residues 96-99 (WAVD). Residues 102–112 (ADWYFGKFLCK) lie on the Extracellular side of the membrane. Residues 113–132 (AVHIIYTVNLYSSVLILAFI) form a helical membrane-spanning segment. The chemokine binding stretch occupies residues 115 to 119 (HIIYT). Over 133–156 (SLDRYLAIVHATNSQRPRKLLAEK) the chain is Cytoplasmic. Positions 135-137 (DRY) match the Important for signaling motif. The tract at residues 137–149 (YLAIVHATNSQRP) is involved in dimerization; when bound to chemokine. The helical transmembrane segment at 157-176 (AVYVGVWIPALLLTIPDFIF) threads the bilayer. Residues 177–202 (ADVSQGDISQGDDRYICDRLYPDSLW) are Extracellular-facing. The interval 193 to 197 (CDRLY) is chemokine binding, important for signaling. The involved in dimerization stretch occupies residues 198 to 217 (PDSLWMVVFQFQHIMVGLIL). Residues 203–223 (MVVFQFQHIMVGLILPGIVIL) traverse the membrane as a helical segment. Residues 224 to 248 (SCYCIIISKLSHSKGHQKRKALKTT) lie on the Cytoplasmic side of the membrane. The chain crosses the membrane as a helical span at residues 249–268 (VILILAFFACWLPYYVGISI). At 269–289 (DSFILLGVIKQGCDFESIVHK) the chain is on the extracellular side. Positions 273-275 (LLG) are involved in dimerization. Residues 290 to 309 (WISITEALAFFHCCLNPILY) form a helical membrane-spanning segment. At 310-359 (AFLGAKFKSSAQHALNSMSRGSSLKILSKGKRGGHSSVSTESESSSFHSS) the chain is on the cytoplasmic side. A phosphoserine mark is found at serine 326 and serine 328. Residues serine 331 and serine 332 each carry the phosphoserine; by PKC and GRK6 modification. The tract at residues 335–359 (ILSKGKRGGHSSVSTESESSSFHSS) is disordered. Residue serine 337 is modified to Phosphoserine; by GRK6. Lysine 338 is covalently cross-linked (Glycyl lysine isopeptide (Lys-Gly) (interchain with G-Cter in ubiquitin)). Residues 344–359 (HSSVSTESESSSFHSS) are compositionally biased toward low complexity. A Phosphoserine; by GRK6 modification is found at serine 346. 2 positions are modified to phosphoserine: serine 355 and serine 358.

It belongs to the G-protein coupled receptor 1 family. Monomer. Can form homodimers. Interacts with CD164. Interacts with ARRB2; the interaction is dependent on the C-terminal phosphorylation of CXCR4 and allows activation of MAPK1 and MAPK3. Interacts with ARR3; the interaction is dependent on the C-terminal phosphorylation of CXCR4 and modulates calcium mobilization. Interacts with RNF113A; the interaction, enhanced by CXCL12, promotes CXCR4 ubiquitination and subsequent degradation. Interacts (via the cytoplasmic C-terminal) with ITCH (via the WW domains I and II); the interaction, enhanced by CXCL12, promotes CXCR4 ubiquitination and leads to its degradation. Interacts with extracellular ubiquitin. Interacts with DBN1; this interaction is enhanced by antigenic stimulation. Following LPS binding, may form a complex with GDF5, HSP90AA1 and HSPA8. In terms of processing, phosphorylated on agonist stimulation. Rapidly phosphorylated on serine and threonine residues in the C-terminal. Phosphorylation at Ser-331 and Ser-332 leads to recruitment of ITCH, ubiquitination and protein degradation. Post-translationally, ubiquitinated after ligand binding, leading to its degradation. Ubiquitinated by ITCH at the cell membrane on agonist stimulation. The ubiquitin-dependent mechanism, endosomal sorting complex required for transport (ESCRT), then targets CXCR4 for lysosomal degradation. This process is dependent also on prior Ser-/Thr-phosphorylation in the C-terminal of CXCR4. Also binding of ARRB1 to STAM negatively regulates CXCR4 sorting to lysosomes though modulating ubiquitination of SFR5S. Sulfation is required for efficient binding of CXCL12/SDF-1alpha and promotes its dimerization. In terms of processing, O- and N-glycosylated. N-glycosylation can mask coreceptor function. The O-glycosylation chondroitin sulfate attachment does not affect interaction with CXCL12/SDF-1alpha nor its coreceptor activity. Lymphocytes, macrophages, neutrophils, microglial cells and astrocytes. Found in spleen, thymus, bone marrow, lymph nodes and, at lower levels in brain, small intestine, stomach and kidney. CXCR4-A is predominant in all tissues tested. During embryonic development, high levels are detected in the endothelium of developing blood vessels and in many regions of the developing brain including the olfactory epithelium, olfactory bulb, hippocampus, cerebellum and spinal cord.

The protein localises to the cell membrane. It is found in the cell junction. It localises to the early endosome. Its subcellular location is the late endosome. The protein resides in the lysosome. Receptor for the C-X-C chemokine CXCL12/SDF-1 that transduces a signal by increasing intracellular calcium ion levels and enhancing MAPK1/MAPK3 activation. Involved in the AKT signaling cascade. Plays a role in regulation of cell migration, e.g. during wound healing. Acts as a receptor for extracellular ubiquitin; leading to enhanced intracellular calcium ions and reduced cellular cAMP levels. Binds bacterial lipopolysaccharide (LPS) et mediates LPS-induced inflammatory response, including TNF secretion by monocytes. Involved in hematopoiesis and in cardiac ventricular septum formation. Also plays an essential role in vascularization of the gastrointestinal tract, probably by regulating vascular branching and/or remodeling processes in endothelial cells. Involved in cerebellar development. In the CNS, could mediate hippocampal-neuron survival. The polypeptide is C-X-C chemokine receptor type 4 (Cxcr4) (Mus musculus (Mouse)).